We begin with the raw amino-acid sequence, 84 residues long: Apoptosis inhibitor Rv3654c (84 aa).

Residues 1 to 39 (MVARHRAQAAADLASLAAAARLPSGLAAACARATLVARA) form the signal peptide.

As to quaternary structure, interacts with human polypyrimidine tract binding protein-associated splicing factor (PSF).

It localises to the secreted. The protein resides in the host cytoplasm. Functionally, effector protein that participates in the suppression of macrophage apoptosis by blocking the extrinsic pathway. Recognizes the host polypyrimidine tract binding protein-associated splicing factor (PSF), which probably leads to its cleavage, diminishing the level of caspase-8 in macrophages. The chain is Apoptosis inhibitor Rv3654c from Mycobacterium tuberculosis (strain ATCC 25618 / H37Rv).